Here is a 103-residue protein sequence, read N- to C-terminus: Enhancer of rudimentary homolog (103 aa).

This sequence belongs to the E(R) family. In terms of assembly, homodimer.

May have a role in the cell cycle. This chain is Enhancer of rudimentary homolog, found in Caenorhabditis elegans.